A 396-amino-acid polypeptide reads, in one-letter code: Elongation factor Tu 1 (396 aa).

The region spanning 10 to 206 is the tr-type G domain; sequence KPHINVGTIG…AMDAHIPQPE (197 aa). The G1 stretch occupies residues 19–26; it reads GHVDHGKT. 19–26 provides a ligand contact to GTP; sequence GHVDHGKT. Residue Thr-26 participates in Mg(2+) binding. A G2 region spans residues 60–64; it reads GITIA. Residues 81-84 are G3; it reads DCPG. GTP is bound by residues 81 to 85 and 136 to 139; these read DCPGH and NKAD. Residues 136 to 139 form a G4 region; sequence NKAD. The tract at residues 174 to 176 is G5; sequence SAL.

It belongs to the TRAFAC class translation factor GTPase superfamily. Classic translation factor GTPase family. EF-Tu/EF-1A subfamily. Monomer.

The protein localises to the cytoplasm. It catalyses the reaction GTP + H2O = GDP + phosphate + H(+). Its function is as follows. GTP hydrolase that promotes the GTP-dependent binding of aminoacyl-tRNA to the A-site of ribosomes during protein biosynthesis. This chain is Elongation factor Tu 1, found in Halorhodospira halophila (strain DSM 244 / SL1) (Ectothiorhodospira halophila (strain DSM 244 / SL1)).